Consider the following 360-residue polypeptide: S-adenosylmethionine:tRNA ribosyltransferase-isomerase (360 aa).

This sequence belongs to the QueA family. Monomer.

The protein resides in the cytoplasm. It catalyses the reaction 7-aminomethyl-7-carbaguanosine(34) in tRNA + S-adenosyl-L-methionine = epoxyqueuosine(34) in tRNA + adenine + L-methionine + 2 H(+). Its pathway is tRNA modification; tRNA-queuosine biosynthesis. Transfers and isomerizes the ribose moiety from AdoMet to the 7-aminomethyl group of 7-deazaguanine (preQ1-tRNA) to give epoxyqueuosine (oQ-tRNA). The protein is S-adenosylmethionine:tRNA ribosyltransferase-isomerase of Sinorhizobium medicae (strain WSM419) (Ensifer medicae).